The sequence spans 150 residues: Anthranilate synthase component 1 (150 aa).

Ser-40 provides a ligand contact to L-tryptophan. Arg-119 contributes to the chorismate binding site.

It belongs to the anthranilate synthase component I family. As to quaternary structure, heterotetramer consisting of two non-identical subunits: a beta subunit (TrpG) and a large alpha subunit (TrpE). It depends on Mg(2+) as a cofactor.

The enzyme catalyses chorismate + L-glutamine = anthranilate + pyruvate + L-glutamate + H(+). The protein operates within amino-acid biosynthesis; L-tryptophan biosynthesis; L-tryptophan from chorismate: step 1/5. With respect to regulation, feedback inhibited by tryptophan. Its function is as follows. Part of a heterotetrameric complex that catalyzes the two-step biosynthesis of anthranilate, an intermediate in the biosynthesis of L-tryptophan. In the first step, the glutamine-binding beta subunit (TrpG) of anthranilate synthase (AS) provides the glutamine amidotransferase activity which generates ammonia as a substrate that, along with chorismate, is used in the second step, catalyzed by the large alpha subunit of AS (TrpE) to produce anthranilate. In the absence of TrpG, TrpE can synthesize anthranilate directly from chorismate and high concentrations of ammonia. This chain is Anthranilate synthase component 1 (trpE), found in Citrobacter freundii.